The sequence spans 506 residues: Protein MGF 505-4R (506 aa).

This sequence belongs to the asfivirus MGF 505 family.

Its function is as follows. Plays a role in virus cell tropism, and may be required for efficient virus replication in macrophages. This chain is Protein MGF 505-4R, found in Ornithodoros (relapsing fever ticks).